Reading from the N-terminus, the 503-residue chain is Beta-amylase Tri a 17 (503 aa).

Positions 51, 91, and 99 each coordinate substrate. Glu184 serves as the catalytic Proton donor. The substrate site is built by Lys293, His298, and Thr340. The active-site Proton acceptor is the Glu378. Residues Asn379–Ala380 and Arg418 contribute to the substrate site.

It belongs to the glycosyl hydrolase 14 family.

It carries out the reaction Hydrolysis of (1-&gt;4)-alpha-D-glucosidic linkages in polysaccharides so as to remove successive maltose units from the non-reducing ends of the chains.. The chain is Beta-amylase Tri a 17 (BMY1) from Triticum aestivum (Wheat).